The chain runs to 179 residues: Orotate phosphoribosyltransferase (179 aa).

5-phospho-alpha-D-ribose 1-diphosphate-binding positions include arginine 24, arginine 89, lysine 90, lysine 93, and 115–123 (EDVITTGGA). Orotate is bound by residues threonine 119 and arginine 147.

It belongs to the purine/pyrimidine phosphoribosyltransferase family. PyrE subfamily. As to quaternary structure, homodimer. Requires Mg(2+) as cofactor.

It catalyses the reaction orotidine 5'-phosphate + diphosphate = orotate + 5-phospho-alpha-D-ribose 1-diphosphate. It functions in the pathway pyrimidine metabolism; UMP biosynthesis via de novo pathway; UMP from orotate: step 1/2. Its function is as follows. Catalyzes the transfer of a ribosyl phosphate group from 5-phosphoribose 1-diphosphate to orotate, leading to the formation of orotidine monophosphate (OMP). The protein is Orotate phosphoribosyltransferase of Nocardioides sp. (strain ATCC BAA-499 / JS614).